The chain runs to 68 residues: Serine rich endogenous peptide 22 (68 aa).

The first 25 residues, 1–25 (MNKALVWLITLLFLIFSATPNRVLA), serve as a signal peptide directing secretion. Positions 50-64 (KIGVGASNSGHSPGA) match the SCOOP motif motif. Positions 56–58 (SNS) match the SxS motif essential for MIK2 binding motif.

The protein belongs to the serine rich endogenous peptide (SCOOP) phytocytokine family. In terms of assembly, interacts with MIK2 (via extracellular leucine-rich repeat domain); this interaction triggers the formation of complex between MIK2 and the BAK1/SERK3 and SERK4 coreceptors, and subsequent BAK1 activation by phosphorylation.

It localises to the cell membrane. The protein localises to the secreted. Its subcellular location is the extracellular space. The protein resides in the apoplast. Its function is as follows. Brassicaceae-specific phytocytokine (plant endogenous peptide released into the apoplast) perceived by MIK2 in a BAK1/SERK3 and SERK4 coreceptors-dependent manner, that modulates various physiological and antimicrobial processes including growth prevention and reactive oxygen species (ROS) response regulation. The protein is Serine rich endogenous peptide 22 of Arabidopsis thaliana (Mouse-ear cress).